We begin with the raw amino-acid sequence, 91 residues long: MGILKLPVVLIVLCVALNHLEGGGKPTESHQMEKRKCGTATCETQRLANFLAPSSNKLGAIFSPTKMGSNTYGKRKKVEILKREPLSYLPI.

A signal peptide spans 1–22; the sequence is MGILKLPVVLIVLCVALNHLEG. Positions 23–33 are excised as a propeptide; sequence GGKPTESHQME. A disulfide bond links cysteine 37 and cysteine 42. At tyrosine 72 the chain carries Tyrosine amide. The propeptide occupies 78 to 91; sequence VEILKREPLSYLPI.

It belongs to the calcitonin family. Can form homodimers. Interacts with IDE and INS. Interaction with INS inhibits homodimerization and fibril formation.

It localises to the secreted. Functionally, amylin/IAPP is a glucoregulatory peptide hormone that plays an important role in the regulation of energy homeostasis. Selectively inhibits insulin-stimulated glucose utilization and glycogen deposition in muscle, while not affecting adipocyte glucose metabolism. IAPP function is mediated by the CALCR-RAMPs (AMYRs) receptor complexes. Amylin can also bind CALCR receptor in the absence of RAMPs, although it is more selective for AMYRs. The sequence is that of Islet amyloid polypeptide (IAPP) from Bos taurus (Bovine).